The primary structure comprises 433 residues: Serine hydroxymethyltransferase (433 aa).

Position 121–123 (121–123 (AHV)) interacts with (6S)-5,6,7,8-tetrahydrofolate. At K227 the chain carries N6-(pyridoxal phosphate)lysine. E243 lines the (6S)-5,6,7,8-tetrahydrofolate pocket.

The protein belongs to the SHMT family. In terms of assembly, homodimer. It depends on pyridoxal 5'-phosphate as a cofactor.

It is found in the cytoplasm. Its pathway is amino-acid biosynthesis; glycine biosynthesis; glycine from L-serine: step 1/1. Its function is as follows. Catalyzes the reversible interconversion of serine and glycine with a modified folate serving as the one-carbon carrier. Also exhibits a pteridine-independent aldolase activity toward beta-hydroxyamino acids, producing glycine and aldehydes, via a retro-aldol mechanism. In Saccharolobus islandicus (strain Y.G.57.14 / Yellowstone #1) (Sulfolobus islandicus), this protein is Serine hydroxymethyltransferase.